The following is a 194-amino-acid chain: Ribosomal RNA large subunit methyltransferase E (194 aa).

The S-adenosyl-L-methionine site is built by Gly48, Trp50, Asp66, Asn82, and Asp110. Lys150 acts as the Proton acceptor in catalysis.

Belongs to the class I-like SAM-binding methyltransferase superfamily. RNA methyltransferase RlmE family.

Its subcellular location is the cytoplasm. It carries out the reaction uridine(2552) in 23S rRNA + S-adenosyl-L-methionine = 2'-O-methyluridine(2552) in 23S rRNA + S-adenosyl-L-homocysteine + H(+). In terms of biological role, specifically methylates the uridine in position 2552 of 23S rRNA at the 2'-O position of the ribose in the fully assembled 50S ribosomal subunit. In Picrophilus torridus (strain ATCC 700027 / DSM 9790 / JCM 10055 / NBRC 100828 / KAW 2/3), this protein is Ribosomal RNA large subunit methyltransferase E.